We begin with the raw amino-acid sequence, 443 residues long: 23S rRNA (uracil(1939)-C(5))-methyltransferase RlmD (443 aa).

In terms of domain architecture, TRAM spans Gln-4–Glu-66. 4 residues coordinate [4Fe-4S] cluster: Cys-79, Cys-85, Cys-88, and Cys-167. Residues Gln-275, Phe-304, Asn-309, Glu-325, Asp-352, and Asp-373 each coordinate S-adenosyl-L-methionine. The active-site Nucleophile is Cys-399.

This sequence belongs to the class I-like SAM-binding methyltransferase superfamily. RNA M5U methyltransferase family. RlmD subfamily.

The enzyme catalyses uridine(1939) in 23S rRNA + S-adenosyl-L-methionine = 5-methyluridine(1939) in 23S rRNA + S-adenosyl-L-homocysteine + H(+). Catalyzes the formation of 5-methyl-uridine at position 1939 (m5U1939) in 23S rRNA. This is 23S rRNA (uracil(1939)-C(5))-methyltransferase RlmD from Xylella fastidiosa (strain 9a5c).